Reading from the N-terminus, the 1438-residue chain is DNA polymerase III PolC-type (1438 aa).

The Exonuclease domain maps to 422-578 (YVVFDVETTG…YDTEATAYMF (157 aa)).

This sequence belongs to the DNA polymerase type-C family. PolC subfamily.

The protein resides in the cytoplasm. It carries out the reaction DNA(n) + a 2'-deoxyribonucleoside 5'-triphosphate = DNA(n+1) + diphosphate. Its function is as follows. Required for replicative DNA synthesis. This DNA polymerase also exhibits 3' to 5' exonuclease activity. This is DNA polymerase III PolC-type from Staphylococcus saprophyticus subsp. saprophyticus (strain ATCC 15305 / DSM 20229 / NCIMB 8711 / NCTC 7292 / S-41).